The chain runs to 260 residues: Indole-3-glycerol phosphate synthase (260 aa).

The protein belongs to the TrpC family.

It carries out the reaction 1-(2-carboxyphenylamino)-1-deoxy-D-ribulose 5-phosphate + H(+) = (1S,2R)-1-C-(indol-3-yl)glycerol 3-phosphate + CO2 + H2O. The protein operates within amino-acid biosynthesis; L-tryptophan biosynthesis; L-tryptophan from chorismate: step 4/5. The chain is Indole-3-glycerol phosphate synthase from Lacticaseibacillus paracasei (strain ATCC 334 / BCRC 17002 / CCUG 31169 / CIP 107868 / KCTC 3260 / NRRL B-441) (Lactobacillus paracasei).